The following is a 463-amino-acid chain: Protein DML1 (463 aa).

This sequence belongs to the misato family.

The protein localises to the mitochondrion. Functionally, involved in the partitioning of the mitochondrial organelle and mitochondrial DNA (mtDNA) inheritance. The polypeptide is Protein DML1 (DML1) (Debaryomyces hansenii (strain ATCC 36239 / CBS 767 / BCRC 21394 / JCM 1990 / NBRC 0083 / IGC 2968) (Yeast)).